The chain runs to 677 residues: DNA ligase (677 aa).

NAD(+)-binding positions include 35 to 39 (DAEYD), 84 to 85 (SL), and E116. The N6-AMP-lysine intermediate role is filled by K118. Positions 139, 176, 295, and 319 each coordinate NAD(+). The Zn(2+) site is built by C413, C416, C431, and C437. The BRCT domain occupies 596-677 (LDELPLAGQV…MLAMFADLEG (82 aa)).

It belongs to the NAD-dependent DNA ligase family. LigA subfamily. Mg(2+) is required as a cofactor. It depends on Mn(2+) as a cofactor.

It catalyses the reaction NAD(+) + (deoxyribonucleotide)n-3'-hydroxyl + 5'-phospho-(deoxyribonucleotide)m = (deoxyribonucleotide)n+m + AMP + beta-nicotinamide D-nucleotide.. In terms of biological role, DNA ligase that catalyzes the formation of phosphodiester linkages between 5'-phosphoryl and 3'-hydroxyl groups in double-stranded DNA using NAD as a coenzyme and as the energy source for the reaction. It is essential for DNA replication and repair of damaged DNA. This chain is DNA ligase, found in Pseudoalteromonas atlantica (strain T6c / ATCC BAA-1087).